We begin with the raw amino-acid sequence, 2375 residues long: Talin-2 (2375 aa).

An FERM domain is found at 88-406 (RPQKIRMLDG…GYIDIILKKK (319 aa)). Residues 312–406 (GVSFFLVKEK…GYIDIILKKK (95 aa)) form an interaction with PIP5K1C region. A phosphoserine mark is found at S428, S450, S624, and S1024. Y1666 is subject to Phosphotyrosine. In terms of domain architecture, I/LWEQ spans 2205–2375 (TEWVDPEDPT…KRLQAAGNAV (171 aa)).

As to quaternary structure, interacts directly with PIP5K1C.

The protein localises to the cytoplasm. The protein resides in the cell junction. It localises to the focal adhesion. It is found in the synapse. Its subcellular location is the cell membrane. The protein localises to the cytoskeleton. Its function is as follows. As a major component of focal adhesion plaques that links integrin to the actin cytoskeleton, may play an important role in cell adhesion. Recruits PIP5K1C to focal adhesion plaques and strongly activates its kinase activity. This chain is Talin-2 (Tln2), found in Mus musculus (Mouse).